A 588-amino-acid polypeptide reads, in one-letter code: Adenine deaminase (588 aa).

Belongs to the metallo-dependent hydrolases superfamily. Adenine deaminase family. In terms of assembly, homodimer. It depends on Mn(2+) as a cofactor.

The catalysed reaction is adenine + H2O + H(+) = hypoxanthine + NH4(+). The polypeptide is Adenine deaminase (Escherichia coli O81 (strain ED1a)).